We begin with the raw amino-acid sequence, 311 residues long: tRNA-cytidine(32) 2-sulfurtransferase (311 aa).

A PP-loop motif motif is present at residues serine 47 to serine 52. Residues cysteine 122, cysteine 125, and cysteine 213 each coordinate [4Fe-4S] cluster.

It belongs to the TtcA family. In terms of assembly, homodimer. It depends on Mg(2+) as a cofactor. The cofactor is [4Fe-4S] cluster.

It is found in the cytoplasm. It catalyses the reaction cytidine(32) in tRNA + S-sulfanyl-L-cysteinyl-[cysteine desulfurase] + AH2 + ATP = 2-thiocytidine(32) in tRNA + L-cysteinyl-[cysteine desulfurase] + A + AMP + diphosphate + H(+). It functions in the pathway tRNA modification. Functionally, catalyzes the ATP-dependent 2-thiolation of cytidine in position 32 of tRNA, to form 2-thiocytidine (s(2)C32). The sulfur atoms are provided by the cysteine/cysteine desulfurase (IscS) system. The protein is tRNA-cytidine(32) 2-sulfurtransferase of Shigella flexneri serotype 5b (strain 8401).